Consider the following 336-residue polypeptide: MINSKPILFSAIQPSGNLTIGNYIGTMRYWSSFQDDYECLYCIADLHSLTTLNKNFSLKKSILDTLALYLACGVNPKKSIIFIQSHVYQHSQLNWILSCFSSFGELSRMTQFKNKRKKEKNDIKNINIGLLNYPVLMSSDILLYQTNLVPVGQDQKQHLELTRNIANRFNFLYGDIFTLPNPLISKNGSKIMSLLDPTKKMSKSDTNKNNVIFLLENISSVFFKIKNAVTDSETPPKIYYDVKRKLGISNLLEILSAITNKEIFILEKEFDGIMYSEFKNIVFDNISKFLHKLQKSYLIYRKDESYLKNIAKEGAIKARLKSEKILKRVFSAVEID.

Residues 13–15 and 21–22 each bind ATP; these read QPS and GN. Residues 14-22 carry the 'HIGH' region motif; that stretch reads PSGNLTIGN. Aspartate 140 is a binding site for L-tryptophan. Residues 152-154, isoleucine 191, and 200-204 contribute to the ATP site; these read GQD and KMSKS. The 'KMSKS' region motif lies at 200-204; it reads KMSKS.

Belongs to the class-I aminoacyl-tRNA synthetase family. In terms of assembly, homodimer.

It localises to the cytoplasm. It carries out the reaction tRNA(Trp) + L-tryptophan + ATP = L-tryptophyl-tRNA(Trp) + AMP + diphosphate + H(+). Catalyzes the attachment of tryptophan to tRNA(Trp). In Buchnera aphidicola subsp. Schizaphis graminum (strain Sg), this protein is Tryptophan--tRNA ligase.